The primary structure comprises 251 residues: GTP cyclohydrolase 1 type 2 homolog (251 aa).

The a divalent metal cation site is built by His-62, His-63, Asp-103, His-215, and Glu-219.

It belongs to the GTP cyclohydrolase I type 2/NIF3 family. In terms of assembly, homohexamer.

This chain is GTP cyclohydrolase 1 type 2 homolog, found in Mycoplasmopsis pulmonis (strain UAB CTIP) (Mycoplasma pulmonis).